We begin with the raw amino-acid sequence, 327 residues long: rRNA 2'-O-methyltransferase fibrillarin (327 aa).

The tract at residues 1–95 (MKPGFSPRGG…NQSGKNVMVE (95 aa)) is disordered. A compositionally biased stretch (gly residues) spans 7-80 (PRGGGFGGRG…GGNRGRGGGR (74 aa)). 6 positions are modified to asymmetric dimethylarginine: Arg8, Arg15, Arg21, Arg24, Arg28, and Arg31. Residues Lys90, Lys108, and Lys115 each participate in a glycyl lysine isopeptide (Lys-Gly) (interchain with G-Cter in SUMO2) cross-link. An N6-acetyllysine modification is found at Lys108. Ser122 bears the Phosphoserine mark. N6-acetyllysine is present on Lys127. Ser130 and Ser132 each carry phosphoserine. Glycyl lysine isopeptide (Lys-Gly) (interchain with G-Cter in SUMO2) cross-links involve residues Lys137, Lys149, and Lys164. Residues 178-179 (TT) and 197-198 (EF) contribute to the S-adenosyl-L-methionine site. 2 positions are modified to N6-acetyllysine: Lys211 and Lys212. S-adenosyl-L-methionine contacts are provided by residues 222-223 (DA) and 242-245 (DVAQ).

It belongs to the methyltransferase superfamily. Fibrillarin family. Component of box C/D small nucleolar ribonucleoprotein (snoRNP) particles that contain SNU13, FBL, NOP5 and NOP56, plus a guide RNA. It is associated with the U3, U8, U13, X and Y small nuclear RNAs. Component of several ribosomal and nucleolar protein complexes. Part of the small subunit (SSU) processome, composed of more than 70 proteins and the RNA chaperone small nucleolar RNA (snoRNA) U3. Interacts with PRMT5 and UTP20. Interacts with DDX5 and C1QBP. Interacts with NOL11. Interacts with PIH1D1. Interacts with RRP1B. Interacts with NOLC1. Interacts with SDE2. Interacts with NOP2 and NOP56. In terms of processing, by homology to other fibrillarins, some or all of the N-terminal domain arginines are modified to asymmetric dimethylarginine (DMA). Post-translationally, ubiquitinated. Ubiquitination leads to proteasomal degradation. Deubiquitinated by USP36. Acetylated by CREBBP/CBP, preventing methylation of 'Gln-105' of histone H2A (H2AQ104me), without affecting rRNA methylation. Deacetylation by SIRT7 restores methylation of 'Gln-105' of histone H2A (H2AQ104me).

Its subcellular location is the nucleus. The protein resides in the nucleolus. It localises to the nucleoplasm. The enzyme catalyses L-glutaminyl-[histone H2A] + S-adenosyl-L-methionine = N(5)-methyl-L-glutaminyl-[histone H2A] + S-adenosyl-L-homocysteine + H(+). It catalyses the reaction a ribonucleotide in rRNA + S-adenosyl-L-methionine = a 2'-O-methylribonucleotide in rRNA + S-adenosyl-L-homocysteine + H(+). It carries out the reaction a ribonucleotide in U6 snRNA + S-adenosyl-L-methionine = a 2'-O-methylribonucleotide in U6 snRNA + S-adenosyl-L-homocysteine + H(+). S-adenosyl-L-methionine-dependent methyltransferase that has the ability to methylate both RNAs and proteins. Involved in pre-rRNA processing by catalyzing the site-specific 2'-hydroxyl methylation of ribose moieties in pre-ribosomal RNA. Site specificity is provided by a guide RNA that base pairs with the substrate. Methylation occurs at a characteristic distance from the sequence involved in base pairing with the guide RNA. Probably catalyzes 2'-O-methylation of U6 snRNAs in box C/D RNP complexes. U6 snRNA 2'-O-methylation is required for mRNA splicing fidelity. Also acts as a protein methyltransferase by mediating methylation of 'Gln-105' of histone H2A (H2AQ104me), a modification that impairs binding of the FACT complex and is specifically present at 35S ribosomal DNA locus. Part of the small subunit (SSU) processome, first precursor of the small eukaryotic ribosomal subunit. During the assembly of the SSU processome in the nucleolus, many ribosome biogenesis factors, an RNA chaperone and ribosomal proteins associate with the nascent pre-rRNA and work in concert to generate RNA folding, modifications, rearrangements and cleavage as well as targeted degradation of pre-ribosomal RNA by the RNA exosome. This chain is rRNA 2'-O-methyltransferase fibrillarin, found in Mus musculus (Mouse).